Consider the following 749-residue polypeptide: Homeobox-leucine zipper protein ROC7 (749 aa).

Residues 26–98 (LDQHQQHQHQ…KKRYHRHTQH (73 aa)) are disordered. Residues 46–57 (SDGRAPRDELEM) show a composition bias toward basic and acidic residues. The span at 68 to 79 (SGGGGGGGGSGG) shows a compositional bias: gly residues. Residues 86–97 (RPRKKRYHRHTQ) show a composition bias toward basic residues. The homeobox DNA-binding region spans 88 to 147 (RKKRYHRHTQHQIQELEAFFKECPHPDDKQRKELSRELGLEPLQVKFWFQNKRTQMKTQH). The stretch at 137 to 218 (QNKRTQMKTQ…DRISAIAAKY (82 aa)) forms a coiled coil. An START domain is found at 256–494 (ADFDKPLVIE…LERQCERLAS (239 aa)).

It belongs to the HD-ZIP homeobox family. Class IV subfamily.

The protein resides in the nucleus. Its function is as follows. Probable transcription factor. This chain is Homeobox-leucine zipper protein ROC7 (ROC7), found in Oryza sativa subsp. japonica (Rice).